Reading from the N-terminus, the 247-residue chain is UPF0280 protein MmarC5_0355 (247 aa).

This sequence belongs to the UPF0280 family.

The sequence is that of UPF0280 protein MmarC5_0355 from Methanococcus maripaludis (strain C5 / ATCC BAA-1333).